The chain runs to 551 residues: L-lactate permease (551 aa).

Transmembrane regions (helical) follow at residues Asn13 to Ile33, Leu37 to Phe57, Val70 to Val90, Gly131 to Phe151, Leu159 to Val179, Met194 to Met214, Phe244 to Leu264, Phe366 to Trp386, Leu405 to Ser425, Thr438 to Gly458, Val494 to Val514, and Ile530 to Ile550.

This sequence belongs to the lactate permease family.

The protein localises to the cell inner membrane. It catalyses the reaction (S)-lactate(in) + H(+)(in) = (S)-lactate(out) + H(+)(out). The enzyme catalyses (R)-lactate(in) + H(+)(in) = (R)-lactate(out) + H(+)(out). It carries out the reaction glycolate(in) + H(+)(in) = glycolate(out) + H(+)(out). In terms of biological role, uptake of L-lactate across the membrane. Can also transport D-lactate and glycolate. Seems to be driven by a proton motive force. This Escherichia coli O6:H1 (strain CFT073 / ATCC 700928 / UPEC) protein is L-lactate permease (lldP).